We begin with the raw amino-acid sequence, 327 residues long: Flap endonuclease 1 (327 aa).

An N-domain region spans residues 1-100; that stretch reads MGNADLRQLA…DEIADRREQR (100 aa). Mg(2+)-binding residues include D28, D82, E154, E156, D176, D178, and D226. Residues 118–247 form an I-domain region; that stretch reads EAARLDARTQ…TALDAIGEHG (130 aa). Residues 319-327 are interaction with PCNA; sequence AQTGLDRWT.

It belongs to the XPG/RAD2 endonuclease family. FEN1 subfamily. As to quaternary structure, interacts with PCNA. PCNA stimulates the nuclease activity without altering cleavage specificity. Requires Mg(2+) as cofactor.

Structure-specific nuclease with 5'-flap endonuclease and 5'-3' exonuclease activities involved in DNA replication and repair. During DNA replication, cleaves the 5'-overhanging flap structure that is generated by displacement synthesis when DNA polymerase encounters the 5'-end of a downstream Okazaki fragment. Binds the unpaired 3'-DNA end and kinks the DNA to facilitate 5' cleavage specificity. Cleaves one nucleotide into the double-stranded DNA from the junction in flap DNA, leaving a nick for ligation. Also involved in the base excision repair (BER) pathway. Acts as a genome stabilization factor that prevents flaps from equilibrating into structures that lead to duplications and deletions. Also possesses 5'-3' exonuclease activity on nicked or gapped double-stranded DNA. In Halobacterium salinarum (strain ATCC 29341 / DSM 671 / R1), this protein is Flap endonuclease 1.